The primary structure comprises 71 residues: Mitotic-spindle organizing protein 1 (71 aa).

The protein belongs to the MOZART1 family. In terms of assembly, part of the gamma-tubulin complex.

Its subcellular location is the cytoplasm. It is found in the cytoskeleton. The protein resides in the microtubule organizing center. The protein localises to the spindle pole body. Required for gamma-tubulin complex recruitment to the microtubule organizing center (MTOC). In Aspergillus clavatus (strain ATCC 1007 / CBS 513.65 / DSM 816 / NCTC 3887 / NRRL 1 / QM 1276 / 107), this protein is Mitotic-spindle organizing protein 1.